The chain runs to 184 residues: Probable RNA 2'-phosphotransferase (184 aa).

Belongs to the KptA/TPT1 family.

Removes the 2'-phosphate from RNA via an intermediate in which the phosphate is ADP-ribosylated by NAD followed by a presumed transesterification to release the RNA and generate ADP-ribose 1''-2''-cyclic phosphate (APPR&gt;P). May function as an ADP-ribosylase. This Shigella boydii serotype 18 (strain CDC 3083-94 / BS512) protein is Probable RNA 2'-phosphotransferase.